The primary structure comprises 348 residues: D-alanine--D-alanine ligase (348 aa).

One can recognise an ATP-grasp domain in the interval 132–334 (KQVLATVGVP…YSDLIEKLVM (203 aa)). Residue 162 to 217 (LETLSFPIFVKPANMGSSVGISKATDESSLRSAIDLALKYDSRILIEQGVTAREIE) participates in ATP binding. Residues aspartate 288, glutamate 301, and asparagine 303 each coordinate Mg(2+).

This sequence belongs to the D-alanine--D-alanine ligase family. It depends on Mg(2+) as a cofactor. Requires Mn(2+) as cofactor.

It is found in the cytoplasm. It carries out the reaction 2 D-alanine + ATP = D-alanyl-D-alanine + ADP + phosphate + H(+). It participates in cell wall biogenesis; peptidoglycan biosynthesis. Cell wall formation. The chain is D-alanine--D-alanine ligase from Streptococcus agalactiae serotype Ia (strain ATCC 27591 / A909 / CDC SS700).